The primary structure comprises 291 residues: Phytanoyl-CoA dioxygenase domain-containing protein 1 (291 aa).

Residue Thr55 is modified to Phosphothreonine. 2-oxoglutarate is bound by residues Lys102, Met141, 156-158, and Trp174; that span reads HQD. 2 residues coordinate Fe cation: His156 and Asp158. His246 is a Fe cation binding site. Residues Ser248 and Arg257 each coordinate 2-oxoglutarate.

This sequence belongs to the PhyH family. PHYHD1 subfamily. Fe cation serves as cofactor.

With respect to regulation, activity is increased by ascorbate. Inhibited by myristoyl-CoA. Its function is as follows. 2-oxoglutarate(2OG)-dependent dioxygenase that catalyzes the conversion of 2-oxoglutarate to succinate and CO(2) in an iron-dependent manner. However, does not couple 2OG turnover to the hydroxylation of acyl-coenzyme A derivatives, implying that it is not directly involved in phytanoyl coenzyme-A metabolism. Does not show detectable activity towards fatty acid CoA thioesters. Isoform 2 probably lacks enzyme activity. Functionally, isoform 3 probably lacks enzyme activity. This chain is Phytanoyl-CoA dioxygenase domain-containing protein 1, found in Homo sapiens (Human).